The primary structure comprises 562 residues: Phosphoglucomutase-1 (562 aa).

M1 is modified (N-acetylmethionine). An N6-acetyllysine modification is found at K16. R23 serves as a coordination point for alpha-D-glucose 1,6-bisphosphate. T115 bears the Phosphothreonine mark. Position 117 (S117) interacts with alpha-D-glucose 1,6-bisphosphate. The active-site Phosphoserine intermediate is the S117. S117 is a binding site for Mg(2+). A phosphoserine mark is found at S117 and S134. T185 carries the post-translational modification Phosphothreonine. A Phosphoserine modification is found at S213. The Mg(2+) site is built by D288, D290, and D292. Residues D292 and R293 each contribute to the alpha-D-glucose 1,6-bisphosphate site. K349 is modified (N6-acetyllysine). Y353 carries the post-translational modification Phosphotyrosine. T357 lines the alpha-D-glucose 1,6-bisphosphate pocket. Residue S369 is modified to Phosphoserine. The alpha-D-glucose 1,6-bisphosphate site is built by E376, S378, and K389. The residue at position 378 (S378) is a Phosphoserine. Position 419 is an N6-succinyllysine (K419). T467 is subject to Phosphothreonine; by PAK1. Residues S485 and S505 each carry the phosphoserine modification. T507 is subject to Phosphothreonine. Residues S509 and S541 each carry the phosphoserine modification.

It belongs to the phosphohexose mutase family. As to quaternary structure, monomer. The cofactor is Mg(2+). Post-translationally, isoform 2 is the major calmodulin-dependent phosphoprotein in junctional skeletal sarcoplasmic reticulum vesicles. Phosphorylation at Thr-467 by PAK1 significantly enhances enzymatic activity.

The protein localises to the cytoplasm. It is found in the sarcoplasmic reticulum. It carries out the reaction alpha-D-glucose 1-phosphate = alpha-D-glucose 6-phosphate. The catalysed reaction is O-phospho-L-seryl-[protein] + alpha-D-glucose 1-phosphate = alpha-D-glucose 1,6-bisphosphate + L-seryl-[protein]. The enzyme catalyses alpha-D-glucose 1,6-bisphosphate + L-seryl-[protein] = O-phospho-L-seryl-[protein] + alpha-D-glucose 6-phosphate. Its activity is regulated as follows. Glucose-1,6-bisphosphate enhances phosphorylation of the active site Ser-117, and thereby increases enzyme activity. Its function is as follows. Catalyzes the reversible isomerization of alpha-D-glucose 1-phosphate to alpha-D-glucose 6-phosphate. The mechanism proceeds via the intermediate compound alpha-D-glucose 1,6-bisphosphate. This enzyme participates in both the breakdown and synthesis of glucose. This is Phosphoglucomutase-1 (PGM1) from Oryctolagus cuniculus (Rabbit).